Consider the following 136-residue polypeptide: Probable glycine cleavage system H protein 3 (136 aa).

The Lipoyl-binding domain maps to 28-109 (MVTVGITSLG…PYDAWIVKIK (82 aa)). An N6-lipoyllysine modification is found at Lys-69.

It belongs to the GcvH family. As to quaternary structure, the glycine cleavage system is composed of four proteins: P, T, L and H. Requires (R)-lipoate as cofactor.

In terms of biological role, the glycine cleavage system catalyzes the degradation of glycine. The H protein shuttles the methylamine group of glycine from the P protein to the T protein. This is Probable glycine cleavage system H protein 3 from Sulfurisphaera tokodaii (strain DSM 16993 / JCM 10545 / NBRC 100140 / 7) (Sulfolobus tokodaii).